A 543-amino-acid polypeptide reads, in one-letter code: RuBisCO large subunit-binding protein subunit alpha, chloroplastic (543 aa).

Residues 1-2 constitute a chloroplast transit peptide; it reads GA.

Belongs to the chaperonin (HSP60) family. As to quaternary structure, oligomer of probably six alpha and six beta subunits.

It localises to the plastid. It is found in the chloroplast. This protein binds RuBisCO small and large subunits and is implicated in the assembly of the enzyme oligomer. The polypeptide is RuBisCO large subunit-binding protein subunit alpha, chloroplastic (Triticum aestivum (Wheat)).